The primary structure comprises 228 residues: Demethylmenaquinone methyltransferase (228 aa).

Residues Thr62, Asp80, 100 to 101 (DA), and Ser117 each bind S-adenosyl-L-methionine.

It belongs to the class I-like SAM-binding methyltransferase superfamily. MenG/UbiE family.

It catalyses the reaction a 2-demethylmenaquinol + S-adenosyl-L-methionine = a menaquinol + S-adenosyl-L-homocysteine + H(+). It participates in quinol/quinone metabolism; menaquinone biosynthesis; menaquinol from 1,4-dihydroxy-2-naphthoate: step 2/2. In terms of biological role, methyltransferase required for the conversion of demethylmenaquinol (DMKH2) to menaquinol (MKH2). The sequence is that of Demethylmenaquinone methyltransferase from Mycolicibacterium vanbaalenii (strain DSM 7251 / JCM 13017 / BCRC 16820 / KCTC 9966 / NRRL B-24157 / PYR-1) (Mycobacterium vanbaalenii).